A 1721-amino-acid polypeptide reads, in one-letter code: Intersectin-1 (1721 aa).

The EH 1 domain maps to 21–109 (ERAKHDQQFH…PVMKQQPVAI (89 aa)). The 36-residue stretch at 53–88 (LPQPVLAQIWALADMNNDGRMDQVEFSIAMKLIKLK) folds into the EF-hand 1 domain. Ca(2+) is bound by residues Asp66, Asn68, Asp70, Arg72, and Glu77. Residue Ser203 is modified to Phosphoserine. The region spanning 221-310 (SRLKYRQLFN…PEYIPPSFRR (90 aa)) is the EH 2 domain. In terms of domain architecture, EF-hand 2 spans 254-289 (LPQAQLASIWNLSDIDQDGKLTAEEFILAMHLIDVA). Asp267, Asp269, Asp271, Lys273, and Glu278 together coordinate Ca(2+). A Phosphoserine modification is found at Ser318. Disordered regions lie at residues 322 to 348 (STSV…KLPV) and 650 to 701 (QRRA…KQEA). Positions 326–702 (DQRLPEEPVL…GEEKGKQEAQ (377 aa)) are KLERQ. Residues 355-659 (RENFERGNLE…QRRAQERDKQ (305 aa)) adopt a coiled-coil conformation. At Ser687 the chain carries Phosphoserine. The SH3 1 domain maps to 740-806 (VKVVYYRALY…PANYAEKIPE (67 aa)). Positions 836–868 (LAVTSSEPSTTPNNWADFSSTWPTSTNEKPETD) are disordered. Residues 838–862 (VTSSEPSTTPNNWADFSSTWPTSTN) show a composition bias toward polar residues. Phosphothreonine is present on Thr897. Ser901, Ser902, and Ser904 each carry phosphoserine. Residues 913-971 (VEGLQAQALYPWRAKKDNHLNFNKNDVITVLEQQDMWWFGEVQGQKGWFPKSYVKLISG) form the SH3 2 domain. Ser978, Ser986, and Ser995 each carry phosphoserine. SH3 domains are found at residues 1002–1060 (VSGE…LKDS) and 1074–1138 (KKPE…LLSP). Residues 1074–1138 (KKPEIAQVIA…PANYVKLLSP (65 aa)) are required for interaction with FCHSD2. The Bipartite nuclear localization signal; in isoform 2 signature appears at 1104-1127 (RKKNPGGWWEGELQARGKKRQIGW). Ser1137 bears the Phosphoserine mark. Phosphothreonine is present on Thr1144. In terms of domain architecture, SH3 5 spans 1155–1214 (AAVCQVIGMYDYTAQNDDELAFNKGQIINVLNKEDPDWWKGEVNGQVGLFPSNYVKLTTD). Residues 1237-1423 (KRQGYIHELI…EELCSQVNEG (187 aa)) enclose the DH domain. A PH domain is found at 1462-1571 (KFLHSGKLYK…WVQKIKAASE (110 aa)). A C2 domain is found at 1579 to 1695 (KKREKAYLVR…KKDQGSKGPV (117 aa)). Residue Ser1645 is modified to Phosphoserine. Ca(2+) contacts are provided by Asp1667, Ser1670, and Asp1673.

Interacts (via DH domain) with CDC42. Interacts (via SH3 domain 1) with WASL. Interacts with dynamin, SNAP25 and SNAP23. Interacts with clathrin-associated proteins and other components of the endocytic machinery, such as SPIN90, EPS15, EPN1, EPN2, STON2, FCHO1, FCHO2 and DAB2. Interacts (via SH3 domains) with REPS1 and SGIP1. Interacts with ARHGAP31. Interacts with ADAM15. Interacts with PRRT2. Interacts (via SH3 domain 4) with FCHSD2 (via SH3 domain 2). Interacts (via SH3 domain 1) with DENND2B. Interacts (via SH3 domains) with CBL. Isoform 2: Interacts with CBL and DNM1. Isoform 2: Interacts with LMNA. Isoform 2: Interacts with importin subunit KPNA1; this is likely to mediate its import into the nucleus. Interacts with DNM2. As to quaternary structure, (Microbial infection) Interacts with vaccinia virus protein A36. Requires Ca(2+) as cofactor. As to expression, isoform 1 is expressed almost exclusively in the brain. Isoform 2 is detected in brain, spleen, lung, liver, heart, skeletal muscle and kidney. Isoform 5 is primarily expressed in brain, spleen, lung and kidney (at protein level). Isoform 1 and isoform 2 are detected in brain. Isoform 2 is ubiquitous in adult and fetal tissues with high expression in skeletal muscle, heart, spleen, ovary, testis and all fetal tissues tested and low expression in thymus, blood, lung, liver and pancreas. Isoform 1 is expressed almost exclusively in the brain, in all brain regions. Not expressed in the spinal cord.

It is found in the endomembrane system. The protein localises to the synapse. It localises to the synaptosome. The protein resides in the cell projection. Its subcellular location is the lamellipodium. It is found in the cell membrane. The protein localises to the membrane. It localises to the clathrin-coated pit. The protein resides in the recycling endosome. Its subcellular location is the endosome. It is found in the cytoplasmic vesicle. The protein localises to the cytoplasm. It localises to the nucleus envelope. Functionally, adapter protein that provides a link between the endocytic membrane traffic and the actin assembly machinery. Acts as a guanine nucleotide exchange factor (GEF) for CDC42, and thereby stimulates actin nucleation mediated by WASL and the ARP2/3 complex. Plays a role in the assembly and maturation of clathrin-coated vesicles. Recruits FCHSD2 to clathrin-coated pits. Involved in endocytosis of activated EGFR, and probably also other growth factor receptors. Involved in endocytosis of integrin beta-1 (ITGB1) and transferrin receptor (TFR); internalization of ITGB1 as DAB2-dependent cargo but not TFR may involve association with DAB2. Promotes ubiquitination and subsequent degradation of EGFR, and thereby contributes to the down-regulation of EGFR-dependent signaling pathways. In chromaffin cells, required for normal exocytosis of catecholamines. Required for rapid replenishment of release-ready synaptic vesicles at presynaptic active zones. Inhibits ARHGAP31 activity toward RAC1. In terms of biological role, plays a role in synaptic vesicle endocytosis in brain neurons. The protein is Intersectin-1 of Homo sapiens (Human).